The chain runs to 629 residues: Arginyl-tRNA--protein transferase 1 (629 aa).

Disordered stretches follow at residues Gln-274 to Pro-298 and Pro-353 to Glu-405. Over residues Thr-282 to Thr-295 the composition is skewed to low complexity. Residues Ser-356–Asn-396 are compositionally biased toward acidic residues.

It belongs to the R-transferase family.

It catalyses the reaction an N-terminal L-alpha-aminoacyl-[protein] + L-arginyl-tRNA(Arg) = an N-terminal L-arginyl-L-aminoacyl-[protein] + tRNA(Arg) + H(+). Its function is as follows. Involved in the post-translational conjugation of arginine to the N-terminal aspartate or glutamate of a protein. This arginylation is required for degradation of the protein via the ubiquitin pathway. Does not arginylate cysteine residues. In Dictyostelium discoideum (Social amoeba), this protein is Arginyl-tRNA--protein transferase 1 (ate1).